A 281-amino-acid polypeptide reads, in one-letter code: uncharacterized protein (281 aa).

The next 4 membrane-spanning stretches (helical) occupy residues 8–28 (ALPV…FIWS), 97–117 (LAVA…RGYG), 147–167 (PARI…GLAV), and 210–230 (IASV…IVPA).

This sequence to S.pombe bem46 and yeast YNL320w.

The protein resides in the cell membrane. This is an uncharacterized protein from Mycobacterium tuberculosis (strain ATCC 25618 / H37Rv).